Consider the following 715-residue polypeptide: SANT and BTB domain regulator of class switch recombination (715 aa).

The SANT domain occupies 21 to 59 (DMILCSLVGVPQPISWDSVARLVPGYTPKECAKRFEELK). Residues 146 to 254 (MVIHVCDEAK…ECIRYCHKNM (109 aa)) form the BTB domain. The segment covering 552–573 (SEEEDYTTGSEVTEDEVGDEEE) has biased composition (acidic residues). Disordered regions lie at residues 552-623 (SEEE…VSLQ) and 689-715 (SAHS…GRPT). Basic residues predominate over residues 578–605 (QAGRKVKPKRSAKQTKKHISSPSIHKKE). 2 stretches are compositionally biased toward polar residues: residues 614 to 623 (DSSPFTVSLQ) and 690 to 699 (AHSNTRQMNT).

Belongs to the KIAA1841 family. As to quaternary structure, homodimer.

In terms of biological role, negatively regulates class switch recombination or isotype switching in splenic B-cells. This is SANT and BTB domain regulator of class switch recombination from Xenopus laevis (African clawed frog).